We begin with the raw amino-acid sequence, 223 residues long: 2-C-methyl-D-erythritol 4-phosphate cytidylyltransferase (223 aa).

It belongs to the IspD/TarI cytidylyltransferase family. IspD subfamily.

The enzyme catalyses 2-C-methyl-D-erythritol 4-phosphate + CTP + H(+) = 4-CDP-2-C-methyl-D-erythritol + diphosphate. It participates in isoprenoid biosynthesis; isopentenyl diphosphate biosynthesis via DXP pathway; isopentenyl diphosphate from 1-deoxy-D-xylulose 5-phosphate: step 2/6. Its function is as follows. Catalyzes the formation of 4-diphosphocytidyl-2-C-methyl-D-erythritol from CTP and 2-C-methyl-D-erythritol 4-phosphate (MEP). In Prochlorococcus marinus (strain MIT 9301), this protein is 2-C-methyl-D-erythritol 4-phosphate cytidylyltransferase.